The following is a 178-amino-acid chain: Ribosome maturation factor RimM (178 aa).

Positions 101–178 constitute a PRC barrel domain; it reads TDEYYWYQLV…VMRVEWDADF (78 aa).

This sequence belongs to the RimM family. As to quaternary structure, binds ribosomal protein uS19.

Its subcellular location is the cytoplasm. Functionally, an accessory protein needed during the final step in the assembly of 30S ribosomal subunit, possibly for assembly of the head region. Essential for efficient processing of 16S rRNA. May be needed both before and after RbfA during the maturation of 16S rRNA. It has affinity for free ribosomal 30S subunits but not for 70S ribosomes. This Pseudomonas entomophila (strain L48) protein is Ribosome maturation factor RimM.